Consider the following 467-residue polypeptide: Asparagine--tRNA ligase (467 aa).

The protein belongs to the class-II aminoacyl-tRNA synthetase family. Homodimer.

Its subcellular location is the cytoplasm. It carries out the reaction tRNA(Asn) + L-asparagine + ATP = L-asparaginyl-tRNA(Asn) + AMP + diphosphate + H(+). This is Asparagine--tRNA ligase from Actinobacillus pleuropneumoniae serotype 3 (strain JL03).